A 333-amino-acid polypeptide reads, in one-letter code: Probable endo-beta-1,4-glucanase B (333 aa).

Positions methionine 1–alanine 17 are cleaved as a signal peptide. N-linked (GlcNAc...) asparagine glycosylation is found at asparagine 37 and asparagine 100. The active-site Proton donor is the glutamate 160. The active-site Nucleophile is glutamate 267.

The protein belongs to the glycosyl hydrolase 5 (cellulase A) family.

The protein resides in the secreted. The catalysed reaction is Endohydrolysis of (1-&gt;4)-beta-D-glucosidic linkages in cellulose, lichenin and cereal beta-D-glucans.. Has endoglucanase activity on substrates containing beta-1,4 glycosidic bonds, like in carboxymethylcellulose (CMC), hydroxyethylcellulose (HEC) and beta-glucan. Involved in the degradation of complex natural cellulosic substrates. The polypeptide is Probable endo-beta-1,4-glucanase B (eglB) (Aspergillus oryzae (strain ATCC 42149 / RIB 40) (Yellow koji mold)).